We begin with the raw amino-acid sequence, 396 residues long: Inositol polyphosphate multikinase (396 aa).

Low complexity predominate over residues 1–13; the sequence is MAAEPPALRLRPP. The interval 1–22 is disordered; sequence MAAEPPALRLRPPGSTGDSPPV. An N-acetylalanine modification is found at alanine 2. A Phosphoserine modification is found at serine 19. Lysine 58 contributes to the ATP binding site. Arginine 65 is a substrate binding site. ATP contacts are provided by residues 114-116 and aspartate 127; that span reads EDV. Residues lysine 129, 143–150, and glutamine 179 each bind substrate; that span reads KIQQQVSK. Positions 300-310 match the Nuclear localization signal motif; the sequence is RHRKLYAKKHQ. Aspartate 365 contacts ATP.

The protein belongs to the inositol phosphokinase (IPK) family. Requires Mg(2+) as cofactor. Highly expressed in kidney, and at lower levels in hippocampus, brain cortex, cerebellum, heart and lung.

It is found in the nucleus. It catalyses the reaction 1D-myo-inositol 1,4,5-trisphosphate + 2 ATP = 1D-myo-inositol 1,3,4,5,6-pentakisphosphate + 2 ADP + 2 H(+). It carries out the reaction 1D-myo-inositol 1,3,4,6-tetrakisphosphate + ATP = 1D-myo-inositol 1,3,4,5,6-pentakisphosphate + ADP + H(+). The catalysed reaction is 1-octadecanoyl-2-(5Z,8Z,11Z,14Z)-eicosatetraenoyl-sn-glycero-3-phospho-1D-myo-inositol 4,5-bisphosphate + ATP = 1-octadecanoyl-2-(5Z,8Z,11Z,14Z-eicosatetraenoyl)-sn-glycero-3-phospho-(1D-myo-inositol 3,4,5-triphosphate) + ADP + H(+). The enzyme catalyses a 1,2-diacyl-sn-glycero-3-phospho-(1D-myo-inositol-4,5-bisphosphate) + ATP = a 1,2-diacyl-sn-glycero-3-phospho-(1D-myo-inositol-3,4,5-trisphosphate) + ADP + H(+). It catalyses the reaction 1D-myo-inositol 1,4,5,6-tetrakisphosphate + ATP = 1D-myo-inositol 1,3,4,5,6-pentakisphosphate + ADP + H(+). Its pathway is phospholipid metabolism; phosphatidylinositol metabolism. In terms of biological role, inositol phosphate kinase with a broad substrate specificity. Phosphorylates inositol 1,4,5-trisphosphate (Ins(1,4,5)P3) first to inositol 1,3,4,5-tetrakisphosphate and then to inositol 1,3,4,5,6-pentakisphosphate (Ins(1,3,4,5,6)P5). Phosphorylates inositol 1,3,4,6-tetrakisphosphate (Ins(1,3,4,6)P4). Phosphorylates inositol 1,4,5,6-tetrakisphosphate (Ins(1,4,5,6)P4). Phosphorylates glycero-3-phospho-1D-myo-inositol 4,5-bisphosphate to glycero-3-phospho-1D-myo-inositol 3,4,5-trisphosphate. Plays an important role in MLKL-mediated necroptosis via its role in the biosynthesis of inositol pentakisphosphate (InsP5) and inositol hexakisphosphate (InsP6). Binding of these highly phosphorylated inositol phosphates to MLKL mediates the release of an N-terminal auto-inhibitory region, leading to activation of the kinase. Essential for activated phospho-MLKL to oligomerize and localize to the cell membrane during necroptosis. Required for normal embryonic development, probably via its role in the biosynthesis of inositol 1,3,4,5,6-pentakisphosphate (Ins(1,3,4,5,6)P5) and inositol hexakisphosphate (InsP6). This is Inositol polyphosphate multikinase (Ipmk) from Rattus norvegicus (Rat).